Reading from the N-terminus, the 406-residue chain is Zinc finger protein CONSTANS-LIKE 6 (406 aa).

Residues cysteine 17, cysteine 20, cysteine 40, and histidine 45 each coordinate Zn(2+). The B box-type; atypical zinc finger occupies 17–59 (CDSCVKRRARWYCAADDAFLCHACDGSVHSANPLARRHERVRL). A disordered region spans residues 63-95 (SAGKYRHASPPHQATWHQGFTRKARTPRGGKKS). A compositionally biased stretch (basic residues) spans 82-95 (FTRKARTPRGGKKS). The CCT domain occupies 357 to 399 (REARVSRYREKRRTRLFSKKIRYEVRKLNAEKRPRMKGRFVKR).

Belongs to the CONSTANS family.

It is found in the nucleus. The sequence is that of Zinc finger protein CONSTANS-LIKE 6 (COL6) from Arabidopsis thaliana (Mouse-ear cress).